Reading from the N-terminus, the 490-residue chain is MSRYGLQKLYINGAYTDSTSGDTFDAVNPANGECIAQLQAANAQDVDKAVAAAKQGQPVWAAMTAMERSRILRRAVDILRDRNDELAAIETADTGKPLSETRSVDIVTGADVLEYYAGLIPALEGQQIPLRGSAFVYTRREPLGVVAGIGAWNYPLQIALWKSAPALAAGNAMIFKPSEVTSLTALKLAGIYTEAGLPAGVFNVLTGSGDQVGQMLTEHPGIAKVSFTGGIASGKKVMANAAGSTLKDVTMELGGKSPLIIFADADLDKAADIAMMANFYSSGQVCTNGTRVFVPQALQAAFEQKIVERVKRIHIGDPSDERTNFGPLVSFQHRDSVMRYIDSGKREGATLLIGGYSLTEGALAHGAYVAPTVFTHCRDDMQIVREEIFGPVMSILSYQSEEEVIRRANDTEYGLAAGVVTQDLNRAHRVIHQLQAGICWINTWGESAPEMPVGGYKHSGVGRENGISTLEHYTQIKSIQVELSSFNSVF.

Asp-93 serves as a coordination point for K(+). 150–152 (GAW) provides a ligand contact to NAD(+). Residue Lys-162 is the Charge relay system of the active site. 176–179 (KPSE) serves as a coordination point for NAD(+). Val-180 contacts K(+). 230-233 (GIAS) lines the NAD(+) pocket. K(+) is bound at residue Leu-246. Residue Glu-252 is the Proton acceptor of the active site. The NAD(+) site is built by Gly-254, Cys-286, and Glu-387. The active-site Nucleophile is Cys-286. Position 286 is a cysteine sulfenic acid (-SOH) (Cys-286). Lys-457 and Gly-460 together coordinate K(+). Glu-464 functions as the Charge relay system in the catalytic mechanism.

This sequence belongs to the aldehyde dehydrogenase family. Dimer of dimers. It depends on K(+) as a cofactor.

It catalyses the reaction betaine aldehyde + NAD(+) + H2O = glycine betaine + NADH + 2 H(+). Its pathway is amine and polyamine biosynthesis; betaine biosynthesis via choline pathway; betaine from betaine aldehyde: step 1/1. Its function is as follows. Involved in the biosynthesis of the osmoprotectant glycine betaine. Catalyzes the irreversible oxidation of betaine aldehyde to the corresponding acid. The polypeptide is Betaine aldehyde dehydrogenase (Yersinia pseudotuberculosis serotype IB (strain PB1/+)).